Here is a 760-residue protein sequence, read N- to C-terminus: Colleterpenol synthase (760 aa).

A terpene cyclase region spans residues 14 to 335 (ASSGLRSKFR…YTRRYPSKAD (322 aa)). D95 contributes to the Mg(2+) binding site. A DDXXD 1 motif is present at residues 95 to 99 (DDYYD). The NSE/DTE signature appears at 233–241 (NDLYSWPKE). Residues 336 to 759 (LRQPEVEFVD…LELVLRRLWI (424 aa)) form a prenyltransferase region. The interval 359-400 (EEKVVSESVESLPTTEVEDEFSSSDASPGSVDQAISTPPSTT) is disordered. Residues 391–400 (QAISTPPSTT) show a composition bias toward polar residues. K477, R480, and H509 together coordinate isopentenyl diphosphate. Residues D516 and D520 each coordinate Mg(2+). The short motif at 516–520 (DDIED) is the DDXXD 2 element. Dimethylallyl diphosphate is bound at residue R525. Position 526 (R526) interacts with isopentenyl diphosphate. Residues K605, T606, Q643, N650, K660, and K670 each coordinate dimethylallyl diphosphate.

It in the N-terminal section; belongs to the terpene synthase family. The protein in the C-terminal section; belongs to the FPP/GGPP synthase family. Hexamer. Mg(2+) is required as a cofactor.

It catalyses the reaction 5 isopentenyl diphosphate + dimethylallyl diphosphate = all-trans-hexaprenyl diphosphate + 5 diphosphate. It carries out the reaction all-trans-hexaprenyl diphosphate + H2O = colleterpenol + diphosphate. Bifunctional terpene synthase that converts dimethylallyl diphosphate (DMAPP) and isopentenyl diphosphate (IPP) into colleterpenol as a single product. The C-terminal prenyltransferase (PT) domain of CgCS catalyzes formation of hexaprenyl diphosphate (HexPP), whereas the N-terminal terpene cyclase (TC) domain catalyzes the cyclization of HexPP to colleterpenol. The chain is Colleterpenol synthase from Colletotrichum gloeosporioides (Anthracnose fungus).